Here is a 369-residue protein sequence, read N- to C-terminus: Replication factor C subunit 5 (369 aa).

The tract at residues 21–40 (INKGKDVVGFGPPPQSKATP) is disordered. An ATP-binding site is contributed by 79-86 (GPPGTGKT).

It belongs to the activator 1 small subunits family. In terms of assembly, heterotetramer of subunits RFC2, RFC3, RFC4 and RFC5 that can form a complex with RFC1.

Its subcellular location is the nucleus. Functionally, functions in cell replication and proliferation. May be involved in chromatin assembly and remodeling. Plays a role in the negative control of pathogenesis-related gene expression and systemic acquired resistance (SAR). This is Replication factor C subunit 5 (RFC5) from Arabidopsis thaliana (Mouse-ear cress).